Reading from the N-terminus, the 223-residue chain is ATP-dependent dethiobiotin synthetase BioD (223 aa).

Mg(2+) is bound at residue T16. Residue K37 is part of the active site. S41 contributes to the substrate binding site. Mg(2+) is bound by residues D50 and E111. Residues D50, 111-114, and 171-172 contribute to the ATP site; these read EGAG and NR.

This sequence belongs to the dethiobiotin synthetase family. In terms of assembly, homodimer. Mg(2+) serves as cofactor.

It is found in the cytoplasm. It carries out the reaction (7R,8S)-7,8-diammoniononanoate + CO2 + ATP = (4R,5S)-dethiobiotin + ADP + phosphate + 3 H(+). The protein operates within cofactor biosynthesis; biotin biosynthesis; biotin from 7,8-diaminononanoate: step 1/2. Its function is as follows. Catalyzes a mechanistically unusual reaction, the ATP-dependent insertion of CO2 between the N7 and N8 nitrogen atoms of 7,8-diaminopelargonic acid (DAPA, also called 7,8-diammoniononanoate) to form a ureido ring. This Anaeromyxobacter dehalogenans (strain 2CP-C) protein is ATP-dependent dethiobiotin synthetase BioD.